The sequence spans 133 residues: Ribosome-binding factor A (133 aa).

Belongs to the RbfA family. In terms of assembly, monomer. Binds 30S ribosomal subunits, but not 50S ribosomal subunits or 70S ribosomes.

Its subcellular location is the cytoplasm. Its function is as follows. One of several proteins that assist in the late maturation steps of the functional core of the 30S ribosomal subunit. Associates with free 30S ribosomal subunits (but not with 30S subunits that are part of 70S ribosomes or polysomes). Required for efficient processing of 16S rRNA. May interact with the 5'-terminal helix region of 16S rRNA. This is Ribosome-binding factor A from Yersinia enterocolitica.